Reading from the N-terminus, the 222-residue chain is MGAPSPDQDIAAIRRNYQRASLRRVDLDADPVEQFRRWLQQAIAADLQESTAMVLSTFDGKRPSSRTVLLKAFDKRGFVFFTNYGSRKAQDISAHPNVSLLFPWYDLERQVAIMGPAERISRAESQAYFSSRPFGSRLGVWVSQQSQVISSRQILKMKWQEMNRRFANGEVPLPEFWGGFRVVPTEFEFWQGRENRLNDRFRYRPQQDSHHAQTWRIERLAP.

Substrate-binding positions include 14–17 and Lys-71; that span reads RRNY. FMN contacts are provided by residues 66 to 71, 81 to 82, Arg-87, Lys-88, and Gln-110; these read RTVLLK and FT. 3 residues coordinate substrate: Tyr-128, Arg-132, and Ser-136. Residues 145 to 146 and Trp-190 contribute to the FMN site; that span reads QS. 196–198 provides a ligand contact to substrate; it reads RLN. An FMN-binding site is contributed by Arg-200.

It belongs to the pyridoxamine 5'-phosphate oxidase family. In terms of assembly, homodimer. FMN is required as a cofactor.

The enzyme catalyses pyridoxamine 5'-phosphate + O2 + H2O = pyridoxal 5'-phosphate + H2O2 + NH4(+). It catalyses the reaction pyridoxine 5'-phosphate + O2 = pyridoxal 5'-phosphate + H2O2. It functions in the pathway cofactor metabolism; pyridoxal 5'-phosphate salvage; pyridoxal 5'-phosphate from pyridoxamine 5'-phosphate: step 1/1. Its pathway is cofactor metabolism; pyridoxal 5'-phosphate salvage; pyridoxal 5'-phosphate from pyridoxine 5'-phosphate: step 1/1. Its function is as follows. Catalyzes the oxidation of either pyridoxine 5'-phosphate (PNP) or pyridoxamine 5'-phosphate (PMP) into pyridoxal 5'-phosphate (PLP). This chain is Pyridoxine/pyridoxamine 5'-phosphate oxidase, found in Prochlorococcus marinus (strain MIT 9303).